The chain runs to 286 residues: Probable aquaporin-3 (286 aa).

A disordered region spans residues 1-34 (MADTYGMNGHNGHVKDRRSSSMNGRNRLYAQQEP). Over 1 to 52 (MADTYGMNGHNGHVKDRRSSSMNGRNRLYAQQEPQRTTHLSEFGKHMVAASG) the chain is Cytoplasmic. The chain crosses the membrane as a helical span at residues 53-73 (EFVGTFLFLYFGYAGNIVAVL). Residues 74 to 87 (QEPISGPNGTLANN) are Extracellular-facing. N-linked (GlcNAc...) asparagine glycans are attached at residues Asn-81 and Asn-86. Residues 88-108 (TVMYIAMAYGFSLLVNVWTFY) traverse the membrane as a helical segment. The Cytoplasmic portion of the chain corresponds to 109 to 135 (RISGGLFNPAVTFGLCLSGQLPWIRAL). Residues 116–118 (NPA) carry the NPA 1 motif. A helical membrane pass occupies residues 136 to 156 (FLFPSQIIAAMCAGGLVNAMF). Topologically, residues 157-175 (PGSASIANTTLGPNTSIAQ) are extracellular. 2 N-linked (GlcNAc...) asparagine glycosylation sites follow: Asn-164 and Asn-170. The chain crosses the membrane as a helical span at residues 176–196 (GVFLEMFFTAQLVFVVLMLAA). Residues 197–202 (EKSRDT) lie on the Cytoplasmic side of the membrane. The helical transmembrane segment at 203-223 (FLAPVGIGLALFVALIPGVFV) threads the bilayer. Residues 224-244 (TGGSANPVRSFGCAVGSRDFP) lie on the Extracellular side of the membrane. The NPA 2 motif lies at 229 to 231 (NPV). Residues 245–265 (GYHWIYWVGPLLGAALAAGYF) form a helical membrane-spanning segment. Over 266 to 286 (RLVKMMHYEEANPGQDSPVDV) the chain is Cytoplasmic.

The protein belongs to the MIP/aquaporin (TC 1.A.8) family.

The protein resides in the membrane. It carries out the reaction H2O(in) = H2O(out). Probable water channel that may have redundant functions with FgAQP5. The sequence is that of Probable aquaporin-3 from Gibberella zeae (strain ATCC MYA-4620 / CBS 123657 / FGSC 9075 / NRRL 31084 / PH-1) (Wheat head blight fungus).